The following is a 158-amino-acid chain: SsrA-binding protein (158 aa).

Belongs to the SmpB family.

The protein localises to the cytoplasm. In terms of biological role, required for rescue of stalled ribosomes mediated by trans-translation. Binds to transfer-messenger RNA (tmRNA), required for stable association of tmRNA with ribosomes. tmRNA and SmpB together mimic tRNA shape, replacing the anticodon stem-loop with SmpB. tmRNA is encoded by the ssrA gene; the 2 termini fold to resemble tRNA(Ala) and it encodes a 'tag peptide', a short internal open reading frame. During trans-translation Ala-aminoacylated tmRNA acts like a tRNA, entering the A-site of stalled ribosomes, displacing the stalled mRNA. The ribosome then switches to translate the ORF on the tmRNA; the nascent peptide is terminated with the 'tag peptide' encoded by the tmRNA and targeted for degradation. The ribosome is freed to recommence translation, which seems to be the essential function of trans-translation. This Bifidobacterium longum (strain DJO10A) protein is SsrA-binding protein.